The following is a 55-amino-acid chain: Large ribosomal subunit protein bL33 (55 aa).

Belongs to the bacterial ribosomal protein bL33 family.

The protein is Large ribosomal subunit protein bL33 of Photorhabdus laumondii subsp. laumondii (strain DSM 15139 / CIP 105565 / TT01) (Photorhabdus luminescens subsp. laumondii).